Consider the following 408-residue polypeptide: Aspartokinase 2 (408 aa).

7-10 (KFGG) lines the ATP pocket. Substrate is bound at residue 25-30 (RAIAEK). Ser41 contributes to the ATP binding site. Residues 47-49 (TDE), Glu74, 125-126 (LE), 150-153 (RGGS), and Ser153 each bind substrate. ATP-binding positions include 173–174 (TD) and 179–184 (FTTDPR). ACT domains are found at residues 264-337 (VTIY…TESK) and 343-408 (IVGS…PSAV). Residues 289–291 (NVD), Gln295, 354–355 (VA), 368–369 (LI), and 375–376 (SE) contribute to the substrate site.

This sequence belongs to the aspartokinase family. In terms of assembly, tetramer consisting of 2 isoforms Alpha (catalytic and regulation) and of a homodimer of 2 isoforms Beta (regulation).

The enzyme catalyses L-aspartate + ATP = 4-phospho-L-aspartate + ADP. It functions in the pathway amino-acid biosynthesis; L-lysine biosynthesis via DAP pathway; (S)-tetrahydrodipicolinate from L-aspartate: step 1/4. It participates in amino-acid biosynthesis; L-methionine biosynthesis via de novo pathway; L-homoserine from L-aspartate: step 1/3. Its pathway is amino-acid biosynthesis; L-threonine biosynthesis; L-threonine from L-aspartate: step 1/5. Lysine-sensitive. Regulated by degradation in response to starvation of cells for various nutrients. Ammonium starvation induced the fastest aspartokinase II decline, followed by amino acid starvation and glucose limitation. Catalyzes the phosphorylation of the beta-carboxyl group of aspartic acid with ATP to yield 4-phospho-L-aspartate, which is involved in the branched biosynthetic pathway leading to the biosynthesis of amino acids threonine, isoleucine and methionine. The protein is Aspartokinase 2 (lysC) of Bacillus subtilis (strain 168).